The chain runs to 436 residues: UDP-N-acetylglucosamine 1-carboxyvinyltransferase 1 (436 aa).

Residue 22–23 (KN) participates in phosphoenolpyruvate binding. R93 provides a ligand contact to UDP-N-acetyl-alpha-D-glucosamine. Catalysis depends on C117, which acts as the Proton donor. A 2-(S-cysteinyl)pyruvic acid O-phosphothioketal modification is found at C117. UDP-N-acetyl-alpha-D-glucosamine-binding positions include 122 to 126 (RPIDQ), D306, and V328.

The protein belongs to the EPSP synthase family. MurA subfamily.

The protein localises to the cytoplasm. The catalysed reaction is phosphoenolpyruvate + UDP-N-acetyl-alpha-D-glucosamine = UDP-N-acetyl-3-O-(1-carboxyvinyl)-alpha-D-glucosamine + phosphate. It participates in cell wall biogenesis; peptidoglycan biosynthesis. Its function is as follows. Cell wall formation. Adds enolpyruvyl to UDP-N-acetylglucosamine. This Bacillus licheniformis (strain ATCC 14580 / DSM 13 / JCM 2505 / CCUG 7422 / NBRC 12200 / NCIMB 9375 / NCTC 10341 / NRRL NRS-1264 / Gibson 46) protein is UDP-N-acetylglucosamine 1-carboxyvinyltransferase 1.